Consider the following 336-residue polypeptide: MKDRYILAFETSCDETSVAVLKNDDELLSNVIASQIESHKRFGGVVPEVASRHHVEVITACIEEALAEAGITEEDVTAVAVTYGPGLVGALLVGLSAAKAFAWAHGLPLIPVNHMAGHLMAAQSVEPLEFPLLALLVSGGHTELVYVSEAGDYKIVGETRDDAVGEAYDKVGRVMGLTYPAGREIDELAHQGQDIYDFPRAMIKEDNLEFSFSGLKSAFINLHHNAEQKGESLSTEDLCASFQAAVMDILMAKTKKALEKYPVKILVVAGGVAANKGLRERLAAEITDVKVIIPPLRLCGDNAGMIAYASVSEWNKENFAGWDLNAKPSLAFDTME.

2 residues coordinate Fe cation: His114 and His118. Residues 136-140 (LVSGG), Asp169, Gly182, Asp186, and Asn275 contribute to the substrate site. Asp301 lines the Fe cation pocket.

The protein belongs to the KAE1 / TsaD family. Fe(2+) is required as a cofactor.

Its subcellular location is the cytoplasm. It catalyses the reaction L-threonylcarbamoyladenylate + adenosine(37) in tRNA = N(6)-L-threonylcarbamoyladenosine(37) in tRNA + AMP + H(+). In terms of biological role, required for the formation of a threonylcarbamoyl group on adenosine at position 37 (t(6)A37) in tRNAs that read codons beginning with adenine. Is involved in the transfer of the threonylcarbamoyl moiety of threonylcarbamoyl-AMP (TC-AMP) to the N6 group of A37, together with TsaE and TsaB. TsaD likely plays a direct catalytic role in this reaction. This chain is tRNA N6-adenosine threonylcarbamoyltransferase, found in Streptococcus pneumoniae serotype 4 (strain ATCC BAA-334 / TIGR4).